The chain runs to 342 residues: Cytosolic Fe-S cluster assembly factor NBP35 (342 aa).

The segment at 1–45 (MGPSLETPEPVEDVLANPLKQKPQLVAPEPEHCPGPESEQAGTAD) is disordered. [4Fe-4S] cluster-binding residues include Cys-33, Cys-47, Cys-50, and Cys-56. 86-93 (GKGGVGKS) lines the ATP pocket. [4Fe-4S] cluster contacts are provided by Cys-259 and Cys-262.

It belongs to the Mrp/NBP35 ATP-binding proteins family. NUBP1/NBP35 subfamily. In terms of assembly, heterotetramer of 2 NBP35 and 2 CFD1 chains. It depends on [4Fe-4S] cluster as a cofactor.

It is found in the cytoplasm. Functionally, component of the cytosolic iron-sulfur (Fe/S) protein assembly (CIA) machinery. Required for maturation of extramitochondrial Fe-S proteins. The NBP35-CFD1 heterotetramer forms a Fe-S scaffold complex, mediating the de novo assembly of an Fe-S cluster and its transfer to target apoproteins. The sequence is that of Cytosolic Fe-S cluster assembly factor NBP35 from Chaetomium globosum (strain ATCC 6205 / CBS 148.51 / DSM 1962 / NBRC 6347 / NRRL 1970) (Soil fungus).